The primary structure comprises 305 residues: Olfactory receptor 9G9 (305 aa).

Topologically, residues 1-27 (MQRSNHTVTEFILLGFTTDPGMQLGLF) are extracellular. An N-linked (GlcNAc...) asparagine glycan is attached at Asn-5. The chain crosses the membrane as a helical span at residues 28–48 (VVFLGVYSLTVVGNSTLIVLI). The Cytoplasmic portion of the chain corresponds to 49 to 64 (CNDSHLHTPMYFVVGN). The helical transmembrane segment at 65–85 (LSFLDLWYSSVYTPKILVICI) threads the bilayer. Over 86 to 96 (SEDKSISFAGC) the chain is Extracellular. The cysteines at positions 96 and 178 are disulfide-linked. Residues 97-117 (LCQFFFSAGLAYSECCLLAAM) traverse the membrane as a helical segment. The Cytoplasmic portion of the chain corresponds to 118 to 138 (AYDRYVAISKPLLYAQAMSIK). Residues 139-159 (LCALLVAVSYCGGFINSSIIT) form a helical membrane-spanning segment. Residues 160–200 (KKTFSFNFCCENIIDDFFCDLLPLVKLACGEKGCYKFLMYF) lie on the Extracellular side of the membrane. A helical membrane pass occupies residues 201 to 221 (LLASNVICPAVLILASYLFII). Topologically, residues 222–239 (TSVLRISSSQGRLKAFST) are cytoplasmic. A helical transmembrane segment spans residues 240 to 260 (CSSHLTSVTLYYGSILYIYAL). At 261–271 (PRSSYSFDMDK) the chain is on the extracellular side. Residues 272 to 291 (IVSTFYTEVLPMLNPMIYSL) form a helical membrane-spanning segment. At 292 to 305 (RNKDVKEALKKLLP) the chain is on the cytoplasmic side.

Belongs to the G-protein coupled receptor 1 family.

The protein localises to the cell membrane. In terms of biological role, odorant receptor. The polypeptide is Olfactory receptor 9G9 (OR9G9) (Homo sapiens (Human)).